The primary structure comprises 218 residues: Oxidative stress regulator AosR (218 aa).

Positions Cys5–Cys9 match the CXXXC motif. Residues Cys5 and Cys9 are joined by a disulfide bond.

This sequence belongs to the AosR family. As to quaternary structure, homodimer. Under oxidative stress, interacts with the extracytoplasmic-function (ECF) RNA polymerase sigma factor SigH.

With respect to regulation, activity is modulated by the formation of a disulfide bound within the N-terminal Cys-X-X-X-Cys (CXXXC) motif. This intramolecular disulfide bond is formed in response to oxidative stress, and results in oxidative stress-dependent interaction with the sigma factor SigH. Functionally, transcription factor crucial for intra-mycobacterial redox homeostasis and protection against host-derived oxidative and nitrosative radicals. In response to oxidative stress, interacts with the ECF sigma factor SigH and, in conjunction with SigH, binds to an auxiliary promoter upstream of mec-cysO-cysM, leading to the transcriptional activation of these genes encoding a non-canonical actinomycete-specific cysteine biosynthesis pathway. Increased transcription of mec-cysO-cysM results in enhanced production of L-cysteine and cysteine-derived antioxidant molecules. Increased production of cysteine protects mycobacteria cells from host phagocyte-derived oxidative and nitrosative stress, thus facilitating the mycobacterial growth in the host. The chain is Oxidative stress regulator AosR from Mycobacterium bovis (strain ATCC BAA-935 / AF2122/97).